The sequence spans 161 residues: MPSFDTVCEADFVEVKNAVENTAKEIGTRFDFKGTSAAIELKDKEITLFGDADFQLQQVEDILRNKLTKRSVDVRFLDIQKAQKIGGDKLKQTIKVKNGIEAELGKKLQKLIKDSKLKVQAAIQGDAVRVTGAKRDDLQAAMALIRKDLADHPLSFNNFRD.

It belongs to the YajQ family.

Its function is as follows. Nucleotide-binding protein. The sequence is that of Nucleotide-binding protein Daci_4781 from Delftia acidovorans (strain DSM 14801 / SPH-1).